The chain runs to 868 residues: DNA mismatch repair protein MutS (868 aa).

620–627 is a binding site for ATP; sequence GPNMGGKS.

The protein belongs to the DNA mismatch repair MutS family.

Functionally, this protein is involved in the repair of mismatches in DNA. It is possible that it carries out the mismatch recognition step. This protein has a weak ATPase activity. The protein is DNA mismatch repair protein MutS of Desulforamulus reducens (strain ATCC BAA-1160 / DSM 100696 / MI-1) (Desulfotomaculum reducens).